The chain runs to 74 residues: Turripeptide OL135 (74 aa).

The first 20 residues, Met1 to Gly20, serve as a signal peptide directing secretion. The propeptide occupies Tyr21 to Xaa28.

The protein belongs to the conopeptide P-like superfamily. Contains 3 disulfide bonds. Expressed by the venom duct.

The protein localises to the secreted. Its function is as follows. Acts as a neurotoxin by inhibiting an ion channel. This chain is Turripeptide OL135, found in Iotyrris olangoensis (Sea snail).